The following is a 261-amino-acid chain: Ribonuclease PH (261 aa).

Phosphate-binding positions include Arg87 and 125–127; that span reads GTR.

Belongs to the RNase PH family. As to quaternary structure, homohexameric ring arranged as a trimer of dimers.

It catalyses the reaction tRNA(n+1) + phosphate = tRNA(n) + a ribonucleoside 5'-diphosphate. Functionally, phosphorolytic 3'-5' exoribonuclease that plays an important role in tRNA 3'-end maturation. Removes nucleotide residues following the 3'-CCA terminus of tRNAs; can also add nucleotides to the ends of RNA molecules by using nucleoside diphosphates as substrates, but this may not be physiologically important. Probably plays a role in initiation of 16S rRNA degradation (leading to ribosome degradation) during starvation. This Desulforudis audaxviator (strain MP104C) protein is Ribonuclease PH.